The chain runs to 464 residues: Cysteine--tRNA ligase 1 (464 aa).

C28 serves as a coordination point for Zn(2+). The 'HIGH' region motif lies at 30 to 40; sequence VTIYDLCHIGH. Residues C209, H234, and E238 each coordinate Zn(2+). Residues 266 to 270 carry the 'KMSKS' region motif; it reads KMSKS. Residue K269 coordinates ATP.

It belongs to the class-I aminoacyl-tRNA synthetase family. Monomer. The cofactor is Zn(2+).

The protein resides in the cytoplasm. The catalysed reaction is tRNA(Cys) + L-cysteine + ATP = L-cysteinyl-tRNA(Cys) + AMP + diphosphate. This Photobacterium profundum (strain SS9) protein is Cysteine--tRNA ligase 1.